We begin with the raw amino-acid sequence, 187 residues long: uncharacterized protein (187 aa).

Residues 1 to 95 form a disordered region; that stretch reads MTTMKRSADP…GSTRPSARYG (95 aa). The span at 46–80 shows a compositional bias: basic residues; sequence RARRSRGPKRFLGKRNYRRARARKPGKRDRAHSSK.

It is found in the mitochondrion. This is an uncharacterized protein from Arabidopsis thaliana (Mouse-ear cress).